A 398-amino-acid chain; its full sequence is Acetate kinase 1 (398 aa).

Asparagine 10 is a binding site for Mg(2+). Lysine 17 provides a ligand contact to ATP. Substrate is bound at residue arginine 89. Residue aspartate 146 is the Proton donor/acceptor of the active site. ATP-binding positions include 206–210, 281–283, and 329–333; these read HLGNG, DCR, and GIGEN. Glutamate 384 contacts Mg(2+).

This sequence belongs to the acetokinase family. Homodimer. Mg(2+) is required as a cofactor. Requires Mn(2+) as cofactor.

It localises to the cytoplasm. The catalysed reaction is acetate + ATP = acetyl phosphate + ADP. Its pathway is metabolic intermediate biosynthesis; acetyl-CoA biosynthesis; acetyl-CoA from acetate: step 1/2. Its function is as follows. Catalyzes the formation of acetyl phosphate from acetate and ATP. Can also catalyze the reverse reaction. In Neisseria meningitidis serogroup B (strain ATCC BAA-335 / MC58), this protein is Acetate kinase 1.